Consider the following 105-residue polypeptide: uncharacterized protein (105 aa).

It belongs to the asfivirus C122R family.

Its subcellular location is the virion. This is an uncharacterized protein from African swine fever virus (strain Badajoz 1971 Vero-adapted) (Ba71V).